Consider the following 131-residue polypeptide: MNDSVTLRTRKFMTNRLLQRKQMVLDVLHPGKATVPKTEIREKLAKMYKTTPDVVFVFGFKTQFGGGKTTGFAMVYDSLDYAKKNEPKYRLARHGLYEKKKTSRKQRKERKNRMKKVRGTKKASVGAAGKK.

Positions 93–131 (RHGLYEKKKTSRKQRKERKNRMKKVRGTKKASVGAAGKK) are disordered. Residues 101-121 (KTSRKQRKERKNRMKKVRGTK) show a composition bias toward basic residues.

This sequence belongs to the eukaryotic ribosomal protein eS24 family. As to quaternary structure, component of the small ribosomal subunit. Part of the small subunit (SSU) processome, composed of more than 70 proteins and the RNA chaperone small nucleolar RNA (snoRNA) U3.

It is found in the cytoplasm. The protein resides in the nucleus. It localises to the nucleolus. Functionally, component of the small ribosomal subunit. The ribosome is a large ribonucleoprotein complex responsible for the synthesis of proteins in the cell. Required for processing of pre-rRNA and maturation of 40S ribosomal subunits. Part of the small subunit (SSU) processome, first precursor of the small eukaryotic ribosomal subunit. During the assembly of the SSU processome in the nucleolus, many ribosome biogenesis factors, an RNA chaperone and ribosomal proteins associate with the nascent pre-rRNA and work in concert to generate RNA folding, modifications, rearrangements and cleavage as well as targeted degradation of pre-ribosomal RNA by the RNA exosome. The protein is Small ribosomal subunit protein eS24 (rps24) of Ictalurus punctatus (Channel catfish).